The following is a 214-amino-acid chain: Thiamine-phosphate synthase (214 aa).

4-amino-2-methyl-5-(diphosphooxymethyl)pyrimidine contacts are provided by residues 37–41 (QLRDK) and asparagine 69. Positions 70 and 89 each coordinate Mg(2+). Serine 108 provides a ligand contact to 4-amino-2-methyl-5-(diphosphooxymethyl)pyrimidine. 2-[(2R,5Z)-2-carboxy-4-methylthiazol-5(2H)-ylidene]ethyl phosphate is bound at residue 134–136 (TDS). 4-amino-2-methyl-5-(diphosphooxymethyl)pyrimidine is bound at residue lysine 137. 2-[(2R,5Z)-2-carboxy-4-methylthiazol-5(2H)-ylidene]ethyl phosphate is bound by residues glycine 167 and 187–188 (IS).

This sequence belongs to the thiamine-phosphate synthase family. Mg(2+) is required as a cofactor.

The catalysed reaction is 2-[(2R,5Z)-2-carboxy-4-methylthiazol-5(2H)-ylidene]ethyl phosphate + 4-amino-2-methyl-5-(diphosphooxymethyl)pyrimidine + 2 H(+) = thiamine phosphate + CO2 + diphosphate. The enzyme catalyses 2-(2-carboxy-4-methylthiazol-5-yl)ethyl phosphate + 4-amino-2-methyl-5-(diphosphooxymethyl)pyrimidine + 2 H(+) = thiamine phosphate + CO2 + diphosphate. It carries out the reaction 4-methyl-5-(2-phosphooxyethyl)-thiazole + 4-amino-2-methyl-5-(diphosphooxymethyl)pyrimidine + H(+) = thiamine phosphate + diphosphate. The protein operates within cofactor biosynthesis; thiamine diphosphate biosynthesis; thiamine phosphate from 4-amino-2-methyl-5-diphosphomethylpyrimidine and 4-methyl-5-(2-phosphoethyl)-thiazole: step 1/1. In terms of biological role, condenses 4-methyl-5-(beta-hydroxyethyl)thiazole monophosphate (THZ-P) and 2-methyl-4-amino-5-hydroxymethyl pyrimidine pyrophosphate (HMP-PP) to form thiamine monophosphate (TMP). The chain is Thiamine-phosphate synthase from Natronomonas pharaonis (strain ATCC 35678 / DSM 2160 / CIP 103997 / JCM 8858 / NBRC 14720 / NCIMB 2260 / Gabara) (Halobacterium pharaonis).